Consider the following 351-residue polypeptide: L-threonine 3-dehydrogenase (351 aa).

Cys-39 is a Zn(2+) binding site. Residues Thr-41 and His-44 each act as charge relay system in the active site. Zn(2+) contacts are provided by His-64, Glu-65, Cys-94, Cys-97, Cys-100, and Cys-108. NAD(+) contacts are provided by residues Ile-176, Asp-196, Arg-201, 271 to 273 (LGI), and 295 to 296 (IY).

The protein belongs to the zinc-containing alcohol dehydrogenase family. As to quaternary structure, homotetramer. Zn(2+) is required as a cofactor.

Its subcellular location is the cytoplasm. The catalysed reaction is L-threonine + NAD(+) = (2S)-2-amino-3-oxobutanoate + NADH + H(+). Its pathway is amino-acid degradation; L-threonine degradation via oxydo-reductase pathway; glycine from L-threonine: step 1/2. In terms of biological role, catalyzes the NAD(+)-dependent oxidation of L-threonine to 2-amino-3-ketobutyrate. This chain is L-threonine 3-dehydrogenase, found in Francisella tularensis subsp. mediasiatica (strain FSC147).